Reading from the N-terminus, the 197-residue chain is Probable nicotinate-nucleotide adenylyltransferase (197 aa).

It belongs to the NadD family.

It carries out the reaction nicotinate beta-D-ribonucleotide + ATP + H(+) = deamido-NAD(+) + diphosphate. It functions in the pathway cofactor biosynthesis; NAD(+) biosynthesis; deamido-NAD(+) from nicotinate D-ribonucleotide: step 1/1. Catalyzes the reversible adenylation of nicotinate mononucleotide (NaMN) to nicotinic acid adenine dinucleotide (NaAD). The polypeptide is Probable nicotinate-nucleotide adenylyltransferase (Thermosipho melanesiensis (strain DSM 12029 / CIP 104789 / BI429)).